Reading from the N-terminus, the 510-residue chain is NAD(P)H-quinone oxidoreductase subunit 2 B, chloroplastic (510 aa).

The next 13 membrane-spanning stretches (helical) occupy residues 24–44, 57–77, 99–119, 124–144, 149–169, 183–203, 227–247, 295–315, 323–343, 354–374, 395–415, 418–438, and 482–502; these read LLLF…GLIL, ISWF…VLLF, IFQF…VEYI, MAIT…MFLC, LITI…LSGY, YLLM…WLYG, PGIS…LSLA, WHLL…LIAI, MLAY…IVGD, YMLF…SFGL, ALSL…AGFF, LYLF…IGLL, and LSMI…NPII.

The protein belongs to the complex I subunit 2 family. As to quaternary structure, NDH is composed of at least 16 different subunits, 5 of which are encoded in the nucleus.

Its subcellular location is the plastid. The protein localises to the chloroplast thylakoid membrane. It carries out the reaction a plastoquinone + NADH + (n+1) H(+)(in) = a plastoquinol + NAD(+) + n H(+)(out). The catalysed reaction is a plastoquinone + NADPH + (n+1) H(+)(in) = a plastoquinol + NADP(+) + n H(+)(out). NDH shuttles electrons from NAD(P)H:plastoquinone, via FMN and iron-sulfur (Fe-S) centers, to quinones in the photosynthetic chain and possibly in a chloroplast respiratory chain. The immediate electron acceptor for the enzyme in this species is believed to be plastoquinone. Couples the redox reaction to proton translocation, and thus conserves the redox energy in a proton gradient. The polypeptide is NAD(P)H-quinone oxidoreductase subunit 2 B, chloroplastic (Lotus japonicus (Lotus corniculatus var. japonicus)).